Here is a 198-residue protein sequence, read N- to C-terminus: Inosine triphosphate pyrophosphatase (198 aa).

Ala2 carries the N-acetylalanine modification. Residue 14-19 (TGNAKK) coordinates ITP. Glu44 contributes to the Mg(2+) binding site. Residues Lys56, 72 to 73 (DT), and Lys89 contribute to the ITP site. Position 146 is a phosphoserine (Ser146). Residues 149–152 (FGWD), Lys172, and 177–178 (HR) contribute to the ITP site.

Belongs to the HAM1 NTPase family. In terms of assembly, homodimer. The cofactor is Mg(2+). Mn(2+) serves as cofactor.

The protein localises to the cytoplasm. The enzyme catalyses ITP + H2O = IMP + diphosphate + H(+). The catalysed reaction is dITP + H2O = dIMP + diphosphate + H(+). It carries out the reaction XTP + H2O = XMP + diphosphate + H(+). It catalyses the reaction N(6)-hydroxy-dATP + H2O = N(6)-hydroxy-dAMP + diphosphate + H(+). Pyrophosphatase that hydrolyzes the non-canonical purine nucleotides inosine triphosphate (ITP), deoxyinosine triphosphate (dITP) as well as 2'-deoxy-N-6-hydroxylaminopurine triphosphate (dHAPTP) and xanthosine 5'-triphosphate (XTP) to their respective monophosphate derivatives. The enzyme does not distinguish between the deoxy- and ribose forms. Probably excludes non-canonical purines from RNA and DNA precursor pools, thus preventing their incorporation into RNA and DNA and avoiding chromosomal lesions. In Mus musculus (Mouse), this protein is Inosine triphosphate pyrophosphatase (Itpa).